Reading from the N-terminus, the 589-residue chain is MKRTHHCGQLDKTLAGQQVQLKGWVQRRRDLGQVIFLDLRDRSGIVQVVCSPEVSEEALKAADRVRNEYLVAVSGIVVERNEQAVNDKLATGAIEVHVRELEILNVSKSLPFQIEADTDAAEDVRLKYRYLDLRRPDMQEAFAMRHKIMKSVRDFLDADGYLEIETPMLTKSTPEGARDYLVPSRVHHGQFYALPQSPQIFKQLLMVSGFEKYFQIVRCFRDEDLRADRQPEFTQIDIETSFLDTEDILAMTEAMMEKLLKETHGLELKRPFSRMTYEEAMNRYGSDKPDTRFGMELIELSDVLKDTEFKVFKGALEAGGIIKGLTLKGGADKLSRKDIDALADFVKPYGAKGLAWLKVDDEGIKGPIAKFFNEAQTAALLAAMDAEAGDLLFFGADKKQVVFHALGALRLKFGKEFQLIDENAFHFLWVTDFPLVEYDEQAKRFVALHHPFTRPKAEDLDLMETHPEQVRAEAYDLVLNGFELGGGSQRIYERELQEKMFKLLGFSSEAAKEEFGFLLEAFDYGTPPHGGIALGLDRIVMLLARKSNLREVIAFPKTASASDLLTEAPNKVSVEQLIDLNLSIISKRS.

An L-aspartate-binding site is contributed by glutamate 175. Residues 199-202 (QIFK) form an aspartate region. Arginine 221 provides a ligand contact to L-aspartate. ATP contacts are provided by residues 221–223 (RDE) and glutamine 230. Histidine 449 contributes to the L-aspartate binding site. Glutamate 483 provides a ligand contact to ATP. An L-aspartate-binding site is contributed by arginine 490. Residue 535–538 (GLDR) coordinates ATP.

The protein belongs to the class-II aminoacyl-tRNA synthetase family. Type 1 subfamily. In terms of assembly, homodimer.

It is found in the cytoplasm. The catalysed reaction is tRNA(Asp) + L-aspartate + ATP = L-aspartyl-tRNA(Asp) + AMP + diphosphate. Catalyzes the attachment of L-aspartate to tRNA(Asp) in a two-step reaction: L-aspartate is first activated by ATP to form Asp-AMP and then transferred to the acceptor end of tRNA(Asp). This is Aspartate--tRNA ligase from Shouchella clausii (strain KSM-K16) (Alkalihalobacillus clausii).